The sequence spans 233 residues: Chalcone--flavanone isomerase (233 aa).

3 residues coordinate substrate: threonine 47, asparagine 113, and serine 192.

This sequence belongs to the chalcone isomerase family.

The enzyme catalyses a chalcone = a flavanone.. Its pathway is secondary metabolite biosynthesis; flavonoid biosynthesis. Functionally, catalyzes the intramolecular cyclization of bicyclic chalcones into tricyclic (S)-flavanones. Responsible for the isomerization of 4,2',4',6'-tetrahydroxychalcone (also termed chalcone) into naringenin. The polypeptide is Chalcone--flavanone isomerase (CHI) (Oryza sativa subsp. japonica (Rice)).